We begin with the raw amino-acid sequence, 647 residues long: Indolepyruvate oxidoreductase subunit IorA (647 aa).

4Fe-4S ferredoxin-type domains are found at residues 585 to 614 (PIYH…WDPE) and 616 to 645 (KKAK…PMKE). The [4Fe-4S] cluster site is built by Cys-594, Cys-597, Cys-600, Cys-606, Cys-625, Cys-628, Cys-631, and Cys-635.

As to quaternary structure, heterodimer of the IorA and IorB subunits. Requires [4Fe-4S] cluster as cofactor.

It catalyses the reaction indole-3-pyruvate + 2 oxidized [2Fe-2S]-[ferredoxin] + CoA = (indol-3-yl)acetyl-CoA + 2 reduced [2Fe-2S]-[ferredoxin] + CO2 + H(+). Catalyzes the ferredoxin-dependent oxidative decarboxylation of arylpyruvates. The protein is Indolepyruvate oxidoreductase subunit IorA (iorA) of Thermococcus kodakarensis (strain ATCC BAA-918 / JCM 12380 / KOD1) (Pyrococcus kodakaraensis (strain KOD1)).